The primary structure comprises 194 residues: NADH-quinone oxidoreductase subunit B (194 aa).

The interval 1–26 (MGLTPSATKPEIAQAPQGIVDPSTGR) is disordered. [4Fe-4S] cluster is bound by residues cysteine 73, cysteine 74, cysteine 138, and cysteine 168.

The protein belongs to the complex I 20 kDa subunit family. As to quaternary structure, NDH-1 is composed of 14 different subunits. Subunits NuoB, C, D, E, F, and G constitute the peripheral sector of the complex. [4Fe-4S] cluster serves as cofactor.

It is found in the cell inner membrane. The catalysed reaction is a quinone + NADH + 5 H(+)(in) = a quinol + NAD(+) + 4 H(+)(out). Its function is as follows. NDH-1 shuttles electrons from NADH, via FMN and iron-sulfur (Fe-S) centers, to quinones in the respiratory chain. The immediate electron acceptor for the enzyme in this species is believed to be ubiquinone. Couples the redox reaction to proton translocation (for every two electrons transferred, four hydrogen ions are translocated across the cytoplasmic membrane), and thus conserves the redox energy in a proton gradient. The sequence is that of NADH-quinone oxidoreductase subunit B from Xanthobacter autotrophicus (strain ATCC BAA-1158 / Py2).